We begin with the raw amino-acid sequence, 249 residues long: 1-(5-phosphoribosyl)-5-[(5-phosphoribosylamino)methylideneamino] imidazole-4-carboxamide isomerase (249 aa).

Residue Asp10 is the Proton acceptor of the active site. The active-site Proton donor is Asp131.

The protein belongs to the HisA/HisF family.

The protein resides in the cytoplasm. The catalysed reaction is 1-(5-phospho-beta-D-ribosyl)-5-[(5-phospho-beta-D-ribosylamino)methylideneamino]imidazole-4-carboxamide = 5-[(5-phospho-1-deoxy-D-ribulos-1-ylimino)methylamino]-1-(5-phospho-beta-D-ribosyl)imidazole-4-carboxamide. It functions in the pathway amino-acid biosynthesis; L-histidine biosynthesis; L-histidine from 5-phospho-alpha-D-ribose 1-diphosphate: step 4/9. The sequence is that of 1-(5-phosphoribosyl)-5-[(5-phosphoribosylamino)methylideneamino] imidazole-4-carboxamide isomerase from Brevibacillus brevis (strain 47 / JCM 6285 / NBRC 100599).